The sequence spans 478 residues: Protein nucleotidyltransferase YdiU (478 aa).

ATP contacts are provided by glycine 84, glycine 86, arginine 87, lysine 107, aspartate 119, glycine 120, arginine 170, and arginine 177. Aspartate 246 acts as the Proton acceptor in catalysis. Residues asparagine 247 and aspartate 256 each coordinate Mg(2+). Aspartate 256 serves as a coordination point for ATP.

Belongs to the SELO family. It depends on Mg(2+) as a cofactor. The cofactor is Mn(2+).

It catalyses the reaction L-seryl-[protein] + ATP = 3-O-(5'-adenylyl)-L-seryl-[protein] + diphosphate. The enzyme catalyses L-threonyl-[protein] + ATP = 3-O-(5'-adenylyl)-L-threonyl-[protein] + diphosphate. It carries out the reaction L-tyrosyl-[protein] + ATP = O-(5'-adenylyl)-L-tyrosyl-[protein] + diphosphate. The catalysed reaction is L-histidyl-[protein] + UTP = N(tele)-(5'-uridylyl)-L-histidyl-[protein] + diphosphate. It catalyses the reaction L-seryl-[protein] + UTP = O-(5'-uridylyl)-L-seryl-[protein] + diphosphate. The enzyme catalyses L-tyrosyl-[protein] + UTP = O-(5'-uridylyl)-L-tyrosyl-[protein] + diphosphate. Functionally, nucleotidyltransferase involved in the post-translational modification of proteins. It can catalyze the addition of adenosine monophosphate (AMP) or uridine monophosphate (UMP) to a protein, resulting in modifications known as AMPylation and UMPylation. The chain is Protein nucleotidyltransferase YdiU from Shigella boydii serotype 4 (strain Sb227).